The following is a 48-amino-acid chain: Light-harvesting protein B-870 beta chain (48 aa).

Residues 2 to 21 are Cytoplasmic-facing; the sequence is AERKGSISGLTDDEAQEFHK. A bacteriochlorophyll is bound by residues H20 and H38. The helical transmembrane segment at 22 to 44 threads the bilayer; sequence FWVQGFVGFTAVAVVAHFLVWVW. The Periplasmic segment spans residues 45-48; sequence RPWL.

As to quaternary structure, an alpha/beta heterodimer. The core complex is formed by different alpha and beta chains, binding bacteriochlorophyll molecules, and arranged most probably in tetrameric structures disposed around the reaction center. The non-pigmented gamma chains may constitute additional components.

It is found in the cell inner membrane. Antenna complexes are light-harvesting systems, which transfer the excitation energy to the reaction centers. This chain is Light-harvesting protein B-870 beta chain (pufB), found in Rubrivivax gelatinosus (Rhodocyclus gelatinosus).